The chain runs to 652 residues: p-hydroxybenzoic acid efflux pump subunit AaeB (652 aa).

The next 11 helical transmembrane spans lie at 8 to 28 (FPIKLTFAIVLSLLIGFHFNL), 34 to 54 (AVMTACIVAGGTAFAAGGDPF), 64 to 84 (LRIIGTFLGCIAALTIMIATI), 88 to 108 (ALMMLLCCMWAGLCVWLSSLI), 118 to 138 (LAGYTALIIVVSVDANGSVLL), 149 to 169 (EIIIGIVCAILADMLFSPRSV), 367 to 387 (LFWLWTGWASGSGAMVMLAVI), 404 to 424 (FLYGMIVAIPLGSLYYMVIMP), 429 to 449 (SMLLLCISLGVMAFIGGILIQ), 453 to 473 (IGTLGGLVGTINIITLDNPMT), and 480 to 500 (LDNALGQAIGCFLALLVILLI).

It belongs to the aromatic acid exporter ArAE (TC 2.A.85) family.

It localises to the cell inner membrane. In terms of biological role, forms an efflux pump with AaeA. Could function as a metabolic relief valve, allowing to eliminate certain compounds when they accumulate to high levels in the cell. This chain is p-hydroxybenzoic acid efflux pump subunit AaeB, found in Erwinia billingiae (strain Eb661).